A 426-amino-acid chain; its full sequence is Ammonium transporter Rh type A (426 aa).

At 1–4 the chain is on the cytoplasmic side; sequence MRFK. A helical transmembrane segment spans residues 5–25; it reads FPLMAIGLEVVMIVLFALFVQ. Topologically, residues 26–54 are extracellular; that stretch reads YETSVNTSRNPNETESAAMDVEKTMESYP. N-linked (GlcNAc...) asparagine glycosylation is found at Asn-31 and Asn-37. Residues 55–75 traverse the membrane as a helical segment; it reads FFQDVHIMVFAGFGFLMTFLW. Over 76 to 78 the chain is Cytoplasmic; that stretch reads KYG. Residues 79–99 form a helical membrane-spanning segment; the sequence is FSGVGINLLIAALGLQWGTII. At 100 to 124 the chain is on the extracellular side; it reads QGIFRSHGQKFLIEMKNMIHADFST. Helical transmembrane passes span 125–145 and 146–166; these read VTVLISFGAVLGKTSPVQMLI and MTILEITVYAANEYLVFKILW. At 167–170 the chain is on the extracellular side; that stretch reads ASDT. Residues 171 to 191 form a helical membrane-spanning segment; that stretch reads GESMTIHAFGAYFGLAVAGIL. Over 192–210 the chain is Cytoplasmic; the sequence is YRSGLKEKHSNEESVYHSD. The helical transmembrane segment at 211–231 threads the bilayer; sequence LFAMIGSLFLWIFWPSFNSAT. At 232 to 241 the chain is on the extracellular side; that stretch reads ADEAKKQYRA. Residues 242–262 traverse the membrane as a helical segment; that stretch reads IVNTYFSLAASVVTAYACSSL. The Cytoplasmic segment spans residues 263–270; it reads LESRGKLN. A helical membrane pass occupies residues 271–288; it reads MVHIQNATLAGGVAVGTC. The Extracellular segment spans residues 289–292; that stretch reads ADME. A helical membrane pass occupies residues 293 to 313; the sequence is IPPYYAMIIGSIAGAVSVFGF. At 314–331 the chain is on the cytoplasmic side; the sequence is KFLTPLFTTKLRIHDTCG. A helical transmembrane segment spans residues 332–352; that stretch reads VHNLHGLPGVIGGLAGIITVA. Over 353–371 the chain is Extracellular; the sequence is LEESDSTKTVSQAAALGSS. A helical transmembrane segment spans residues 372 to 392; the sequence is IATALVGGLITGAILKIPFWA. At 393-426 the chain is on the cytoplasmic side; it reads QPPDEDCYDDSVYWEVPERKEYDNHFHELLSTLH.

The protein belongs to the ammonium transporter (TC 2.A.49) family. Rh subfamily. As to quaternary structure, homodimer. Heterotrimer; a RHCE monomer interacts with a RHAG homodimer. Component of the ankyrin-1 complex in the erythrocyte, composed of ANK1, RHCE, RHAG, SLC4A1, EPB42, GYPA, GYPB and AQP1. Interacts with GYPB (via the N-terminal); this interaction bridges the (RHAG)2(RHCE) heterotrimer with the SLC4A1 Band 3 I dimer complexed with GYPA. Glycosylated.

It is found in the membrane. It catalyses the reaction methylamine(out) = methylamine(in). The enzyme catalyses NH4(+)(in) = NH4(+)(out). The catalysed reaction is CO2(out) = CO2(in). Component of the ankyrin-1 complex, a multiprotein complex involved in the stability and shape of the erythrocyte membrane. Heterotrimer with RHCE (RHAG)2(RHCE), that transports ammonium and its related derivative methylammonium, in both neutral and ionic forms, across the erythrocyte membrane. The transport of NH4(+) is electrogenic and masks the NH3 transport. Also, may act as a CO2 channel. Moreover in erythrocyte, regulates RHD membrane expression and is associated with rhesus blood group antigen expression. The protein is Ammonium transporter Rh type A of Bos taurus (Bovine).